A 383-amino-acid chain; its full sequence is Beta-1,3-galactosyltransferase 4 (383 aa).

The Cytoplasmic segment spans residues 1-8 (MPLSLFRR). Residues 9–29 (LLLAALLLVIIWTLFGPSGIG) traverse the membrane as a helical segment. Residues 30–383 (EELLSLSLAS…RCRVIAWLHS (354 aa)) lie on the Lumenal side of the membrane. Residue asparagine 149 is glycosylated (N-linked (GlcNAc...) asparagine).

This sequence belongs to the glycosyltransferase 31 family.

It localises to the golgi apparatus membrane. The catalysed reaction is a ganglioside GM2 (d18:1(4E)) + UDP-alpha-D-galactose = a ganglioside GM1 (d18:1(4E)) + UDP + H(+). The enzyme catalyses a ganglioside GM2 + UDP-alpha-D-galactose = a ganglioside GM1 + UDP + H(+). It catalyses the reaction a ganglioside GD2 (d18:1(4E)) + UDP-alpha-D-galactose = a ganglioside GD1b (d18:1(4E)) + UDP + H(+). It carries out the reaction a ganglioside GA2 (d18:1(4E)) + UDP-alpha-D-galactose = a ganglioside GA1 (d18:1(4E)) + UDP + H(+). Its pathway is protein modification; protein glycosylation. In terms of biological role, involved in GM1/GD1B/GA1 ganglioside biosynthesis. The chain is Beta-1,3-galactosyltransferase 4 (B3GALT4) from Canis lupus familiaris (Dog).